Reading from the N-terminus, the 352-residue chain is Nicotinate-nucleotide--dimethylbenzimidazole phosphoribosyltransferase (352 aa).

The active-site Proton acceptor is glutamate 318.

The protein belongs to the CobT family.

The catalysed reaction is 5,6-dimethylbenzimidazole + nicotinate beta-D-ribonucleotide = alpha-ribazole 5'-phosphate + nicotinate + H(+). It participates in nucleoside biosynthesis; alpha-ribazole biosynthesis; alpha-ribazole from 5,6-dimethylbenzimidazole: step 1/2. Catalyzes the synthesis of alpha-ribazole-5'-phosphate from nicotinate mononucleotide (NAMN) and 5,6-dimethylbenzimidazole (DMB). This chain is Nicotinate-nucleotide--dimethylbenzimidazole phosphoribosyltransferase, found in Geotalea uraniireducens (strain Rf4) (Geobacter uraniireducens).